The primary structure comprises 260 residues: MAPCKPRTFTAGQDPLTKFDGAISVRNLPRPPDRLFLFHGIMRPSRGIYAKLIATGQKPPTHFHPSQWEFFRVLRGNLTIDFNGRAIHRTASDGELAVPPYTHHVIYGTPGTEMNEVEFVVSASDPAAEEQGATVMDQPFFENWYGYQEDVFQRGEKLDFIQVLSMFDAGGTYLSPPWWVPFRSWVGLFLGIVVGRWIGGLLGYAPFYPEWTTDWEAACETMQQSWFQRRFADPQAQERAREKFRGQLEQEASAKGGKSE.

The protein belongs to the oxidoreductase OpS7 family.

It functions in the pathway secondary metabolite biosynthesis; terpenoid biosynthesis. Oxidoreductase; part of the gene cluster that mediates the biosynthesis of macrophorins, isoprenoid epoxycyclohexenones containing cyclized drimane moieties. The first step of the pathway is the synthesis of 6-methylsalicylic acid (6-MSA) by the polyketide synthase macA. 6-MSA is then converted to m-cresol by the decarboxylase macB. The cytochrome P450 monooxygenase macC then catalyzes the oxidation of m-cresol to toluquinol. Epoxidation of toluquinol is then performed by the short chain dehydrogenase macD, with the help of macE, and a further prenylation by macG leads to 7-deacetoxyyanuthone A. The next step is the hydroxylation of C-22 of 7-deacetoxyyanuthone A by the cytochrome P450 monooxygenase macH to yield 22-deacetylyanuthone A. O-Mevalon transferase macI then attaches mevalon to the hydroxyl group of 22-deacetylyanuthone A to produce yanuthone E. The terpene cyclase macJ catalyzes the cyclization of 22-deacetylyanuthone A to macrophorin A. MacJ is also able to catalyze cyclization of yanuthone E and 7-deacetoxyyanuthone A to their corresponding macrophorins. The macJ products can be further modified by macH and macJ, as well as by the FAD-dependent monooxygenase macF, to produce additional macrophorins, including 4'-oxomacrophorin A, 4'-oxomacrophorin D and 4'-oxomacrophorin E. This Penicillium terrestre protein is Oxidoreductase macE.